Consider the following 421-residue polypeptide: Leucine-rich repeat-containing protein 42 (421 aa).

LRR repeat units follow at residues 149–170, 174–195, 202–222, 234–255, and 259–280; these read VLCS…EEIK, ELTR…LEHL, SVTQ…RKMT, NLAL…GYLF, and KLNC…KDKL. A disordered region spans residues 376-406; sequence PLLSQESKKSKKRAFKESEQEQSSPQSAKQK. Low complexity predominate over residues 396 to 406; the sequence is EQSSPQSAKQK. S399 is subject to Phosphoserine.

The protein belongs to the LRRC42 family.

The polypeptide is Leucine-rich repeat-containing protein 42 (Lrrc42) (Mus musculus (Mouse)).